Consider the following 153-residue polypeptide: Aspartate carbamoyltransferase regulatory chain (153 aa).

C109, C114, C138, and C141 together coordinate Zn(2+).

This sequence belongs to the PyrI family. In terms of assembly, contains catalytic and regulatory chains. Requires Zn(2+) as cofactor.

Involved in allosteric regulation of aspartate carbamoyltransferase. The chain is Aspartate carbamoyltransferase regulatory chain from Salmonella paratyphi A (strain ATCC 9150 / SARB42).